Here is a 307-residue protein sequence, read N- to C-terminus: Putative serpin A13 (307 aa).

Positions 1–21 (MEASRWWLLVTVLMAGAHCVA) are cleaved as a signal peptide. N-linked (GlcNAc...) asparagine glycans are attached at residues Asn-150 and Asn-250.

This sequence belongs to the serpin family.

Its subcellular location is the secreted. This chain is Putative serpin A13 (SERPINA13P), found in Homo sapiens (Human).